Here is a 150-residue protein sequence, read N- to C-terminus: Large ribosomal subunit protein bL9 (150 aa).

It belongs to the bacterial ribosomal protein bL9 family.

In terms of biological role, binds to the 23S rRNA. This Verminephrobacter eiseniae (strain EF01-2) protein is Large ribosomal subunit protein bL9.